Reading from the N-terminus, the 135-residue chain is Methylglyoxal synthase (135 aa).

Positions 1–135 (MQKTLALVAH…GLYERAVPEF (135 aa)) constitute an MGS-like domain. Residues His10, Lys14, 36–39 (TGTT), and 56–57 (SG) each bind substrate. Asp62 acts as the Proton donor/acceptor in catalysis. Substrate is bound at residue His89.

The protein belongs to the methylglyoxal synthase family.

The catalysed reaction is dihydroxyacetone phosphate = methylglyoxal + phosphate. In terms of biological role, catalyzes the formation of methylglyoxal from dihydroxyacetone phosphate. In Pseudoalteromonas atlantica (strain T6c / ATCC BAA-1087), this protein is Methylglyoxal synthase.